Here is a 184-residue protein sequence, read N- to C-terminus: ADP-ribosylation factor-like protein 2 (184 aa).

G2 is lipidated: N-myristoyl glycine. Residues 23–30 (GLDNAGKT), 66–70 (DVGGQ), G68, and 125–128 (NKSD) each bind GTP.

Belongs to the small GTPase superfamily. Arf family.

It is found in the cytoplasm. Its subcellular location is the cell membrane. The protein localises to the cytoskeleton. It localises to the microtubule organizing center. The protein resides in the centrosome. Functionally, GTP-binding protein that functions in embryogenesis, cytokinesis, germline development and microtubulule cytoskeleton dynamics. The polypeptide is ADP-ribosylation factor-like protein 2 (evl-20.1) (Caenorhabditis briggsae).